Here is a 171-residue protein sequence, read N- to C-terminus: Adenine phosphoribosyltransferase (171 aa).

This sequence belongs to the purine/pyrimidine phosphoribosyltransferase family. In terms of assembly, homodimer.

Its subcellular location is the cytoplasm. It catalyses the reaction AMP + diphosphate = 5-phospho-alpha-D-ribose 1-diphosphate + adenine. It functions in the pathway purine metabolism; AMP biosynthesis via salvage pathway; AMP from adenine: step 1/1. In terms of biological role, catalyzes a salvage reaction resulting in the formation of AMP, that is energically less costly than de novo synthesis. The protein is Adenine phosphoribosyltransferase of Prochlorococcus marinus (strain MIT 9515).